Reading from the N-terminus, the 364-residue chain is Dihydroorotate dehydrogenase (quinone) (364 aa).

Residues A61–K65 and T85 each bind FMN. K65 serves as a coordination point for substrate. N110 to F114 is a binding site for substrate. 2 residues coordinate FMN: N139 and N170. Residue N170 coordinates substrate. Residue S173 is the Nucleophile of the active site. N175 lines the substrate pocket. The FMN site is built by K214 and A242. Residue N243–T244 coordinates substrate. Residues G266, G295, and Y316–S317 contribute to the FMN site.

The protein belongs to the dihydroorotate dehydrogenase family. Type 2 subfamily. Monomer. FMN is required as a cofactor.

Its subcellular location is the cell membrane. It catalyses the reaction (S)-dihydroorotate + a quinone = orotate + a quinol. It participates in pyrimidine metabolism; UMP biosynthesis via de novo pathway; orotate from (S)-dihydroorotate (quinone route): step 1/1. Functionally, catalyzes the conversion of dihydroorotate to orotate with quinone as electron acceptor. The protein is Dihydroorotate dehydrogenase (quinone) of Rhodopseudomonas palustris (strain BisA53).